The chain runs to 109 residues: Putative double-stranded DNA mimic protein YciU (109 aa).

The protein belongs to the putative dsDNA mimic protein family.

May act as a double-stranded DNA (dsDNA) mimic. Probably regulates the activity of a dsDNA-binding protein. The protein is Putative double-stranded DNA mimic protein YciU of Shigella flexneri.